The chain runs to 162 residues: SsrA-binding protein (162 aa).

The protein belongs to the SmpB family.

The protein localises to the cytoplasm. In terms of biological role, required for rescue of stalled ribosomes mediated by trans-translation. Binds to transfer-messenger RNA (tmRNA), required for stable association of tmRNA with ribosomes. tmRNA and SmpB together mimic tRNA shape, replacing the anticodon stem-loop with SmpB. tmRNA is encoded by the ssrA gene; the 2 termini fold to resemble tRNA(Ala) and it encodes a 'tag peptide', a short internal open reading frame. During trans-translation Ala-aminoacylated tmRNA acts like a tRNA, entering the A-site of stalled ribosomes, displacing the stalled mRNA. The ribosome then switches to translate the ORF on the tmRNA; the nascent peptide is terminated with the 'tag peptide' encoded by the tmRNA and targeted for degradation. The ribosome is freed to recommence translation, which seems to be the essential function of trans-translation. This Colwellia psychrerythraea (strain 34H / ATCC BAA-681) (Vibrio psychroerythus) protein is SsrA-binding protein.